The primary structure comprises 153 residues: Ribosome maturation factor RimP (153 aa).

This sequence belongs to the RimP family.

It localises to the cytoplasm. In terms of biological role, required for maturation of 30S ribosomal subunits. The polypeptide is Ribosome maturation factor RimP (Marinomonas sp. (strain MWYL1)).